The sequence spans 298 residues: NFU1 iron-sulfur cluster scaffold homolog, mitochondrial (298 aa).

The segment at 194–262 (IKELLDTRIR…IPEVESVEQV (69 aa)) is nifU. [4Fe-4S] cluster is bound by residues cysteine 231 and cysteine 234.

Belongs to the NifU family.

The protein localises to the mitochondrion. Its function is as follows. Molecular scaffold for [Fe-S] cluster assembly of mitochondrial iron-sulfur proteins. This is NFU1 iron-sulfur cluster scaffold homolog, mitochondrial from Drosophila grimshawi (Hawaiian fruit fly).